The following is a 358-amino-acid chain: Peptide chain release factor 1 (358 aa).

The residue at position 233 (glutamine 233) is an N5-methylglutamine.

The protein belongs to the prokaryotic/mitochondrial release factor family. Methylated by PrmC. Methylation increases the termination efficiency of RF1.

Its subcellular location is the cytoplasm. In terms of biological role, peptide chain release factor 1 directs the termination of translation in response to the peptide chain termination codons UAG and UAA. The sequence is that of Peptide chain release factor 1 from Geobacillus sp. (strain WCH70).